A 368-amino-acid polypeptide reads, in one-letter code: Nicotinamide/nicotinic acid mononucleotide adenylyltransferase (368 aa).

Positions 1-14 (MHTMNGDNFANSFP) are enriched in polar residues. Residues 1-25 (MHTMNGDNFANSFPKNPLLSRNSSS) are disordered. At Ser-36 the chain carries Phosphoserine. The segment at 47–78 (AKEHEERIRRPSVNRAWQKNSTSGGPSVSLEK) is disordered. Over residues 61 to 72 (RAWQKNSTSGGP) the composition is skewed to polar residues. Phosphoserine occurs at positions 75 and 85. The NAD(+) site is built by Ser-135 and Phe-136. His-143 lines the ATP pocket. Residues Thr-215, Gly-250, Asp-252, Trp-263, Arg-282, and Asn-313 each coordinate NAD(+). Position 318–321 (318–321 (TKVR)) interacts with ATP.

It belongs to the eukaryotic NMN adenylyltransferase family. A divalent metal cation serves as cofactor.

Its subcellular location is the cytoplasm. It localises to the nucleus. The catalysed reaction is beta-nicotinamide D-ribonucleotide + ATP + H(+) = diphosphate + NAD(+). It catalyses the reaction nicotinate beta-D-ribonucleotide + ATP + H(+) = deamido-NAD(+) + diphosphate. It functions in the pathway cofactor biosynthesis; NAD(+) biosynthesis; deamido-NAD(+) from nicotinate D-ribonucleotide: step 1/1. The protein operates within cofactor biosynthesis; NAD(+) biosynthesis; NAD(+) from nicotinamide D-ribonucleotide: step 1/1. Catalyzes the formation of NAD(+) from nicotinamide mononucleotide (NMN) and ATP. Can also use the deamidated form; nicotinic acid mononucleotide (NaMN) as substrate to form deamido-NAD(+) (NaAD). Key enzyme in both de novo and salvage pathways for NAD(+) biosynthesis. In Schizosaccharomyces pombe (strain 972 / ATCC 24843) (Fission yeast), this protein is Nicotinamide/nicotinic acid mononucleotide adenylyltransferase.